Consider the following 571-residue polypeptide: MRTSQYLLSTLKETPADAVVISHQLLLRAGMIRRLASGLYTWLPMGLRVLRKVETIVREEMNAAGALEVLMPAVQPAELWQESGRWEQYGPELLRLKDRHEREFCVGPTHEEVITDLARNELNSYKQLPINFYQIQTKFRDEIRPRFGLMRGREFIMKDAYSFHLSQDSLQQTYDGMYQAYSKIFSRLGLDFRPVQADNGSIGGSGSHEFHVLANSGEDDIVFSDSSDYAANIEKAEAVPRESARGSATEDMRLVDTPNTKTITALVDGFQLPIEKTIKTLVVHGAEEGTLVALIVRGDHELNEIKAANQPLVASPLVFASEAEIRAAIGAGPGSLGPVNLPIACIVDRSVALMSDFAAGANIEDKHYFGVNWERDLPLPEVADLRNVVEGDPSPDGKGTLVIKRGIEVGHIFQLGTKYSEAMKLNVLSEQGKPVNLIMGCYGIGVSRVVAAAIEQNHDERGILWPSALAPFQIALVPLKYETESVKQATDKLYAELTAAGFEVLLDDRDKKTSPGVKFADMELIGIPHRIVISDRGLNEGVLEYKGRRDSESQNLPIGELMSFITEKLSR.

Belongs to the class-II aminoacyl-tRNA synthetase family. ProS type 1 subfamily. In terms of assembly, homodimer.

It localises to the cytoplasm. The catalysed reaction is tRNA(Pro) + L-proline + ATP = L-prolyl-tRNA(Pro) + AMP + diphosphate. Its function is as follows. Catalyzes the attachment of proline to tRNA(Pro) in a two-step reaction: proline is first activated by ATP to form Pro-AMP and then transferred to the acceptor end of tRNA(Pro). As ProRS can inadvertently accommodate and process non-cognate amino acids such as alanine and cysteine, to avoid such errors it has two additional distinct editing activities against alanine. One activity is designated as 'pretransfer' editing and involves the tRNA(Pro)-independent hydrolysis of activated Ala-AMP. The other activity is designated 'posttransfer' editing and involves deacylation of mischarged Ala-tRNA(Pro). The misacylated Cys-tRNA(Pro) is not edited by ProRS. The sequence is that of Proline--tRNA ligase from Pseudomonas aeruginosa (strain UCBPP-PA14).